The chain runs to 336 residues: Large ribosomal subunit protein uL3 (336 aa).

The interval 1-34 (MVRHHQPRKGSVAFSPRKRAAKETPRIKSWPQND) is disordered.

Belongs to the universal ribosomal protein uL3 family. Part of the 50S ribosomal subunit. Forms a cluster with proteins L14 and L24e.

One of the primary rRNA binding proteins, it binds directly near the 3'-end of the 23S rRNA, where it nucleates assembly of the 50S subunit. This Methanobrevibacter smithii (strain ATCC 35061 / DSM 861 / OCM 144 / PS) protein is Large ribosomal subunit protein uL3.